Here is a 94-residue protein sequence, read N- to C-terminus: Aspartyl/glutamyl-tRNA(Asn/Gln) amidotransferase subunit C (94 aa).

It belongs to the GatC family. Heterotrimer of A, B and C subunits.

The enzyme catalyses L-glutamyl-tRNA(Gln) + L-glutamine + ATP + H2O = L-glutaminyl-tRNA(Gln) + L-glutamate + ADP + phosphate + H(+). It carries out the reaction L-aspartyl-tRNA(Asn) + L-glutamine + ATP + H2O = L-asparaginyl-tRNA(Asn) + L-glutamate + ADP + phosphate + 2 H(+). In terms of biological role, allows the formation of correctly charged Asn-tRNA(Asn) or Gln-tRNA(Gln) through the transamidation of misacylated Asp-tRNA(Asn) or Glu-tRNA(Gln) in organisms which lack either or both of asparaginyl-tRNA or glutaminyl-tRNA synthetases. The reaction takes place in the presence of glutamine and ATP through an activated phospho-Asp-tRNA(Asn) or phospho-Glu-tRNA(Gln). The sequence is that of Aspartyl/glutamyl-tRNA(Asn/Gln) amidotransferase subunit C from Hydrogenobaculum sp. (strain Y04AAS1).